The chain runs to 2381 residues: Nipped-B-like protein A (2381 aa).

One copy of the HEAT 1 repeat lies at 85 to 124 (SDELEGDVPVLLQLLMSRNPNIFRNKTAPNTPQYPAQAGI). Disordered stretches follow at residues 131–211 (PPYK…HLQQ), 240–289 (HLLQ…DIVG), and 329–503 (LAAI…ELPP). Residues 138-158 (GSMQGSPASANYQQASMSHSP) are compositionally biased toward polar residues. Composition is skewed to basic and acidic residues over residues 254-273 (GTKD…KSSE) and 333-355 (ERME…DKDK). Gly residues predominate over residues 373-389 (GTAGSGSGAPGGGGGAN). A compositionally biased stretch (basic and acidic residues) spans 451–473 (VKHEHDHDPEHPHYDDKQPDTPR). The PxVxL motif signature appears at 552–565 (KKSVKPVVVLQKLS). The segment covering 570 to 580 (QRLMRERDSRA) has biased composition (basic and acidic residues). 2 disordered regions span residues 570–604 (QRLM…SVLK) and 629–708 (RKRS…NEVA). Over residues 581 to 592 (SKSGKNRLSSGR) the composition is skewed to polar residues. Composition is skewed to basic and acidic residues over residues 633–642 (TVNERPKYAE) and 658–694 (KDRD…RYDD). HEAT repeat units follow at residues 1299 to 1337 (SQSF…VDPS), 1375 to 1413 (PQLT…EQPN), 1477 to 1516 (YDWF…HILK), and 1843 to 1881 (LIHP…KYTG). Disordered regions lie at residues 2005 to 2095 (IPGR…DLDD) and 2228 to 2271 (LLGG…GDSA). Residues 2006 to 2021 (PGRKSRKRRRRRRRPQ) are compositionally biased toward basic residues. The span at 2040–2056 (EEERGAQDEERERHSGD) shows a compositional bias: basic and acidic residues. Acidic residues predominate over residues 2057–2068 (EEYDDDDYEEDE). Residues 2077–2086 (KPTEDIRQSE) are compositionally biased toward basic and acidic residues.

Belongs to the SCC2/Nipped-B family.

The protein resides in the nucleus. In terms of biological role, may play a structural role in chromatin. Involved in sister chromatid cohesion, possibly by facilitating the cohesin complex loading. Transcription factor, which may promote cortical neuron migration during brain development by regulating the transcription of crucial genes in this process. The protein is Nipped-B-like protein A (nipbla) of Danio rerio (Zebrafish).